Reading from the N-terminus, the 146-residue chain is Cytochrome b5 type B (146 aa).

The propeptide occupies 1–11 (MATPEASGSGE). Ser-19 carries the phosphoserine modification. The Cytochrome b5 heme-binding domain maps to 20–96 (VTYYRLEEVA…LKQYYIGDVH (77 aa)). An N6-acetyllysine modification is found at Lys-30. Ser-33 carries the post-translational modification Phosphoserine. Heme-binding residues include His-55 and His-79. The residue at position 80 (Ser-80) is a Phosphoserine. Residues 119–136 (WAYWFVPIVGAILIGFLY) form a helical membrane-spanning segment.

This sequence belongs to the cytochrome b5 family. In terms of assembly, component of a complex composed of cytochrome b5, NADH-cytochrome b5 reductase (CYB5R3) and MTARC2.

It localises to the mitochondrion outer membrane. Functionally, cytochrome b5 is a membrane-bound hemoprotein functioning as an electron carrier for several membrane-bound oxygenases. This chain is Cytochrome b5 type B (Cyb5b), found in Mus musculus (Mouse).